The chain runs to 327 residues: Gamma-resorcylate decarboxylase (327 aa).

Positions 8, 10, 164, and 287 each coordinate Zn(2+). The active site involves Asp-287.

The protein belongs to the metallo-dependent hydrolases superfamily. ACMSD family. Homotetramer. The cofactor is Zn(2+).

The enzyme catalyses 2,6-dihydroxybenzoate + H(+) = resorcinol + CO2. The catalysed reaction is 2,3-dihydroxybenzoate + H(+) = catechol + CO2. It functions in the pathway aromatic compound metabolism. Insensitive to oxygen. Decarboxylation and carboxylation are inhibited by AgNO(3) and by diethyl pyrocarbonate, a histidine residue-specific inhibitor. Decarboxylation is also inhibited by HgCl(2) and activated by MgCl(2). Its function is as follows. Involved in the gamma-resorcylate (2,6-dihydroxybenzoate) catabolism. Catalyzes the reversible decarboxylation of gamma-resorcylate to resorcinol. Also catalyzes the decarboxylation of 2,3-dihydroxybenzoate to catechol, but does not act on 2-hydroxybenzoic acid 3-hydroxybenzoic acid, 4-hydroxybenzoic acid, 3,4-dihydroxybenzoic acid, 2,5-dihydroxybenzoic acid, 2,3,4-trihydroxybenzoic acid, 3,4,5-trihydroxybenzoic acid, 4-aminobenzoic acid, o-hydroxyphenylacetic acid and vanillic acid. Resorcinol and catechol can both be carboxylated by the reverse reaction. The protein is Gamma-resorcylate decarboxylase of Rhizobium radiobacter (Agrobacterium tumefaciens).